Consider the following 330-residue polypeptide: Ketol-acid reductoisomerase (NADP(+)) (330 aa).

Positions 1–181 (MKMYYESDVN…GFTKAGVIET (181 aa)) constitute a KARI N-terminal Rossmann domain. NADP(+) contacts are provided by residues 24-27 (YGSQ), R47, S52, and 82-85 (DEIQ). H107 is a catalytic residue. G133 lines the NADP(+) pocket. A KARI C-terminal knotted domain is found at 182–327 (TFKEETETDL…ERLRKACGLQ (146 aa)). Mg(2+)-binding residues include D190, E194, E226, and E230. S251 serves as a coordination point for substrate.

The protein belongs to the ketol-acid reductoisomerase family. It depends on Mg(2+) as a cofactor.

The enzyme catalyses (2R)-2,3-dihydroxy-3-methylbutanoate + NADP(+) = (2S)-2-acetolactate + NADPH + H(+). The catalysed reaction is (2R,3R)-2,3-dihydroxy-3-methylpentanoate + NADP(+) = (S)-2-ethyl-2-hydroxy-3-oxobutanoate + NADPH + H(+). It participates in amino-acid biosynthesis; L-isoleucine biosynthesis; L-isoleucine from 2-oxobutanoate: step 2/4. It functions in the pathway amino-acid biosynthesis; L-valine biosynthesis; L-valine from pyruvate: step 2/4. Involved in the biosynthesis of branched-chain amino acids (BCAA). Catalyzes an alkyl-migration followed by a ketol-acid reduction of (S)-2-acetolactate (S2AL) to yield (R)-2,3-dihydroxy-isovalerate. In the isomerase reaction, S2AL is rearranged via a Mg-dependent methyl migration to produce 3-hydroxy-3-methyl-2-ketobutyrate (HMKB). In the reductase reaction, this 2-ketoacid undergoes a metal-dependent reduction by NADPH to yield (R)-2,3-dihydroxy-isovalerate. The protein is Ketol-acid reductoisomerase (NADP(+)) of Methanobrevibacter smithii (strain ATCC 35061 / DSM 861 / OCM 144 / PS).